Here is a 131-residue protein sequence, read N- to C-terminus: Large ribosomal subunit protein bL17 (131 aa).

Belongs to the bacterial ribosomal protein bL17 family. Part of the 50S ribosomal subunit. Contacts protein L32.

The sequence is that of Large ribosomal subunit protein bL17 from Shewanella frigidimarina (strain NCIMB 400).